The primary structure comprises 269 residues: Energy-coupling factor transporter ATP-binding protein EcfA1 (269 aa).

The region spanning 8–242 is the ABC transporter domain; sequence IVFKNVSFQY…AEELTRIGLD (235 aa). An ATP-binding site is contributed by 42 to 49; sequence GHNGSGKS.

Belongs to the ABC transporter superfamily. Energy-coupling factor EcfA family. Forms a stable energy-coupling factor (ECF) transporter complex composed of 2 membrane-embedded substrate-binding proteins (S component), 2 ATP-binding proteins (A component) and 2 transmembrane proteins (T component).

Its subcellular location is the cell membrane. ATP-binding (A) component of a common energy-coupling factor (ECF) ABC-transporter complex. Unlike classic ABC transporters this ECF transporter provides the energy necessary to transport a number of different substrates. The chain is Energy-coupling factor transporter ATP-binding protein EcfA1 from Staphylococcus aureus (strain Mu50 / ATCC 700699).